Consider the following 75-residue polypeptide: Nigwaprin-a (75 aa).

The first 24 residues, 1 to 24 (MSSGGLLLLLGLLTLWAELTPVSG), serve as a signal peptide directing secretion. The 46-residue stretch at 27 to 72 (RPVKPGLCPPRPQKPPCVKECKNDWSCRGEQKCCRYGCIYECRDPI) folds into the WAP domain. 4 cysteine pairs are disulfide-bonded: C34-C60, C43-C64, C47-C59, and C53-C68.

The protein belongs to the venom waprin family. Expressed by the venom gland.

It localises to the secreted. In terms of biological role, damages membranes of susceptible bacteria. Has no hemolytic activity. Not toxic to mice. Does not inhibit the proteinases elastase and cathepsin G. This Cryptophis nigrescens (Eastern small-eyed snake) protein is Nigwaprin-a.